The following is a 242-amino-acid chain: ATP synthase subunit a (242 aa).

Helical transmembrane passes span 29-49, 84-104, 114-134, 140-160, 181-201, and 203-223; these read SSIY…LAFY, FIPL…LGMT, IIVT…VGFV, FLTL…MIVI, MAGH…MIYL, and FLPI…AILQ.

This sequence belongs to the ATPase A chain family. In terms of assembly, F-type ATPases have 2 components, CF(1) - the catalytic core - and CF(0) - the membrane proton channel. CF(1) has five subunits: alpha(3), beta(3), gamma(1), delta(1), epsilon(1). CF(0) has three main subunits: a(1), b(2) and c(9-12). The alpha and beta chains form an alternating ring which encloses part of the gamma chain. CF(1) is attached to CF(0) by a central stalk formed by the gamma and epsilon chains, while a peripheral stalk is formed by the delta and b chains.

Its subcellular location is the cell inner membrane. Functionally, key component of the proton channel; it plays a direct role in the translocation of protons across the membrane. The protein is ATP synthase subunit a of Rickettsia akari (strain Hartford).